The sequence spans 542 residues: Apolipoprotein N-acyltransferase (542 aa).

A run of 6 helical transmembrane segments spans residues 26–46 (ASVI…LSLV), 54–74 (IWCL…SWML), 89–109 (LLIS…VLCF), 113–133 (YWGA…VRYY), 163–183 (WAGQ…VLVF), and 187–207 (FSYG…GTYY). Residues 220–499 (LRVAIVQPGY…PDVLQVSVPV (280 aa)) enclose the CN hydrolase domain. Catalysis depends on Glu-264, which acts as the Proton acceptor. The active site involves Lys-349. The Nucleophile role is filled by Cys-404. The chain crosses the membrane as a helical span at residues 509–529 (FGDAPLLFVAVSSVLGVVGYF).

This sequence belongs to the CN hydrolase family. Apolipoprotein N-acyltransferase subfamily.

The protein resides in the cell inner membrane. The enzyme catalyses N-terminal S-1,2-diacyl-sn-glyceryl-L-cysteinyl-[lipoprotein] + a glycerophospholipid = N-acyl-S-1,2-diacyl-sn-glyceryl-L-cysteinyl-[lipoprotein] + a 2-acyl-sn-glycero-3-phospholipid + H(+). It participates in protein modification; lipoprotein biosynthesis (N-acyl transfer). Functionally, catalyzes the phospholipid dependent N-acylation of the N-terminal cysteine of apolipoprotein, the last step in lipoprotein maturation. The protein is Apolipoprotein N-acyltransferase of Chlamydia muridarum (strain MoPn / Nigg).